A 418-amino-acid polypeptide reads, in one-letter code: cAMP-dependent protein kinase type II-beta regulatory subunit (418 aa).

The tract at residues 2-153 is dimerization and phosphorylation; sequence SIEIPAGLTE…RLQEACKDIL (152 aa). A compositionally biased stretch (basic and acidic residues) spans 48-57; that stretch reads TARFGHEGRT. The segment at 48–96 is disordered; it reads TARFGHEGRTWGDLGAAAGGGTPSKGVNFAEEPMQSDSEDGEEEEAAPA. Position 69 is a phosphothreonine (Thr69). A phosphoserine mark is found at Ser83, Ser85, and Ser114. Residues 84–94 are compositionally biased toward acidic residues; sequence DSEDGEEEEAA. Residues 154 to 275, Glu223, Arg232, 276 to 418, Glu352, and Arg361 each bind 3',5'-cyclic AMP; these read LFKN…ESLP and FLKS…EPTA.

It belongs to the cAMP-dependent kinase regulatory chain family. The inactive form of the enzyme is composed of two regulatory chains and two catalytic chains. Activation by cAMP produces two active catalytic monomers and a regulatory dimer that binds four cAMP molecules. Interacts with PRKACA and PRKACB. Interacts with the phosphorylated form of PJA2. Forms a complex composed of PRKAR2B, GSK3B and GSKIP through GSKIP interaction; facilitates PKA-induced phosphorylation and regulates GSK3B activity. Phosphorylated by the activated catalytic chain. Four types of regulatory chains are found: I-alpha, I-beta, II-alpha, and II-beta. Their expression varies among tissues and is in some cases constitutive and in others inducible.

It localises to the cytoplasm. It is found in the cell membrane. Regulatory subunit of the cAMP-dependent protein kinases involved in cAMP signaling in cells. Type II regulatory chains mediate membrane association by binding to anchoring proteins, including the MAP2 kinase. This is cAMP-dependent protein kinase type II-beta regulatory subunit (PRKAR2B) from Homo sapiens (Human).